A 379-amino-acid polypeptide reads, in one-letter code: Inactive 2'-5'-oligoadenylate synthase 1B (379 aa).

The Cytoplasmic portion of the chain corresponds to 1–355 (MEQELRSIPA…VPTEVDIPSQ (355 aa)). A helical; Anchor for type IV membrane protein transmembrane segment spans residues 356–374 (NYFFHIICLIFWLLLRLIF). Residues 375–379 (GKHSV) lie on the Extracellular side of the membrane.

The protein belongs to the 2-5A synthase family. Interacts with OSBPL1A and ABCF3. In terms of tissue distribution, highly expressed in the brain, liver, spleen and heart.

It is found in the endoplasmic reticulum membrane. In terms of biological role, does not have 2'-5'-OAS activity, but can bind double-stranded RNA. Displays antiviral activity against viruses via an alternative antiviral pathway independent of RNase L. The chain is Inactive 2'-5'-oligoadenylate synthase 1B (Oas1b) from Rattus norvegicus (Rat).